The sequence spans 212 residues: Thiamine-phosphate synthase (212 aa).

Residues 33 to 37 (QMRFK) and N65 contribute to the 4-amino-2-methyl-5-(diphosphooxymethyl)pyrimidine site. Mg(2+)-binding residues include D66 and D85. T104 provides a ligand contact to 4-amino-2-methyl-5-(diphosphooxymethyl)pyrimidine. 130–132 (TNT) is a 2-[(2R,5Z)-2-carboxy-4-methylthiazol-5(2H)-ylidene]ethyl phosphate binding site. Position 133 (K133) interacts with 4-amino-2-methyl-5-(diphosphooxymethyl)pyrimidine. G166 provides a ligand contact to 2-[(2R,5Z)-2-carboxy-4-methylthiazol-5(2H)-ylidene]ethyl phosphate.

This sequence belongs to the thiamine-phosphate synthase family. Mg(2+) is required as a cofactor.

The enzyme catalyses 2-[(2R,5Z)-2-carboxy-4-methylthiazol-5(2H)-ylidene]ethyl phosphate + 4-amino-2-methyl-5-(diphosphooxymethyl)pyrimidine + 2 H(+) = thiamine phosphate + CO2 + diphosphate. It carries out the reaction 2-(2-carboxy-4-methylthiazol-5-yl)ethyl phosphate + 4-amino-2-methyl-5-(diphosphooxymethyl)pyrimidine + 2 H(+) = thiamine phosphate + CO2 + diphosphate. The catalysed reaction is 4-methyl-5-(2-phosphooxyethyl)-thiazole + 4-amino-2-methyl-5-(diphosphooxymethyl)pyrimidine + H(+) = thiamine phosphate + diphosphate. It participates in cofactor biosynthesis; thiamine diphosphate biosynthesis; thiamine phosphate from 4-amino-2-methyl-5-diphosphomethylpyrimidine and 4-methyl-5-(2-phosphoethyl)-thiazole: step 1/1. Condenses 4-methyl-5-(beta-hydroxyethyl)thiazole monophosphate (THZ-P) and 2-methyl-4-amino-5-hydroxymethyl pyrimidine pyrophosphate (HMP-PP) to form thiamine monophosphate (TMP). The protein is Thiamine-phosphate synthase of Flavobacterium johnsoniae (strain ATCC 17061 / DSM 2064 / JCM 8514 / BCRC 14874 / CCUG 350202 / NBRC 14942 / NCIMB 11054 / UW101) (Cytophaga johnsonae).